We begin with the raw amino-acid sequence, 319 residues long: 33 kDa chaperonin (319 aa).

Basic and acidic residues predominate over residues 1–10 (MTDASGSERL). Positions 1-25 (MTDASGSERLKRAKGISEGTPSSLP) are disordered. Intrachain disulfides connect Cys261-Cys263 and Cys294-Cys297.

This sequence belongs to the HSP33 family. Under oxidizing conditions two disulfide bonds are formed involving the reactive cysteines. Under reducing conditions zinc is bound to the reactive cysteines and the protein is inactive.

The protein resides in the cytoplasm. In terms of biological role, redox regulated molecular chaperone. Protects both thermally unfolding and oxidatively damaged proteins from irreversible aggregation. Plays an important role in the bacterial defense system toward oxidative stress. In Synechococcus sp. (strain JA-2-3B'a(2-13)) (Cyanobacteria bacterium Yellowstone B-Prime), this protein is 33 kDa chaperonin.